A 1414-amino-acid chain; its full sequence is DNA-directed RNA polymerase subunit beta' (1414 aa).

The Zn(2+) site is built by Cys-70, Cys-72, Cys-85, and Cys-88. Positions 460, 462, and 464 each coordinate Mg(2+). The Zn(2+) site is built by Cys-815, Cys-889, Cys-896, and Cys-899. Residues 1395–1414 (EAEAQFADISSTPDSDTDAS) are disordered.

Belongs to the RNA polymerase beta' chain family. The RNAP catalytic core consists of 2 alpha, 1 beta, 1 beta' and 1 omega subunit. When a sigma factor is associated with the core the holoenzyme is formed, which can initiate transcription. It depends on Mg(2+) as a cofactor. The cofactor is Zn(2+).

It carries out the reaction RNA(n) + a ribonucleoside 5'-triphosphate = RNA(n+1) + diphosphate. DNA-dependent RNA polymerase catalyzes the transcription of DNA into RNA using the four ribonucleoside triphosphates as substrates. This is DNA-directed RNA polymerase subunit beta' from Herminiimonas arsenicoxydans.